A 90-amino-acid chain; its full sequence is DNA-binding protein HU-beta (90 aa).

This sequence belongs to the bacterial histone-like protein family. In terms of assembly, heterodimer of an alpha and a beta chain.

In terms of biological role, histone-like DNA-binding protein which is capable of wrapping DNA to stabilize it, and thus to prevent its denaturation under extreme environmental conditions. This Pseudomonas aeruginosa (strain ATCC 15692 / DSM 22644 / CIP 104116 / JCM 14847 / LMG 12228 / 1C / PRS 101 / PAO1) protein is DNA-binding protein HU-beta (hupB).